Here is a 482-residue protein sequence, read N- to C-terminus: BTB/POZ domain and ankyrin repeat-containing protein NOOT1 (482 aa).

The BTB domain maps to 25 to 107 (SDVVFSVEGR…LYSGQVSIVP (83 aa)). The C2HC NPR-type zinc finger occupies 113–127 (RPNCGDRGCWHTHCT). The Zn(2+) site is built by Cys116, Cys121, His123, and Cys126. ANK repeat units lie at residues 249–278 (QKIR…LNLD), 279–308 (EALA…DVNF), 313–342 (TGKT…DPNV), and 346–380 (DGVT…KLRL). The interval 395–434 (EEGNNNNSNNNNNATASSATNMYPHHNMNEDHHHSHNNNN) is disordered. The span at 398-415 (NNNNSNNNNNATASSATN) shows a compositional bias: low complexity.

The protein belongs to the plant 'ANKYRIN-BTB/POZ' family. 'NOOT-BOP-COCH-like' (NBCL) subfamily. In terms of assembly, homodimer. Expressed in the shoot apical meristem (SAM) at the base of the developing leaf where stipules are formed. Associated with functional and vestigial abscission zones (AZs), including pulvini.

It is found in the nucleus. The protein localises to the cytoplasm. It localises to the cell membrane. Its pathway is protein modification; protein ubiquitination. Functionally, may act as a substrate-specific adapter of an E3 ubiquitin-protein ligase complex (CUL3-RBX1-BTB) which mediates the ubiquitination and subsequent proteasomal degradation of target proteins. Transcriptional co-regulator involved in the promotion of leaf and floral meristem fate and determinacy. Promotes normal stipule growth and development. Required for the abscission of senescent organs, probably by regulating the cell wall disorganization in abscission zones (AZs, e.g. pulvini at the base of leaves). Involved in the coordination of the symbiotic nodule developmental program. Promotes the formation of root nodules by interacting directly with APP1 to modulate the expression of the nuclear transcription factor Y subunit (NF-YA1), a key nodulin. Necessary for the robust maintenance of nodule identity throughout the nodule developmental program. Involved in the regulation of indeterminate nodule identity in association with NOOT2. In Medicago truncatula (Barrel medic), this protein is BTB/POZ domain and ankyrin repeat-containing protein NOOT1.